A 345-amino-acid chain; its full sequence is Heat-inducible transcription repressor HrcA (345 aa).

The protein belongs to the HrcA family.

Functionally, negative regulator of class I heat shock genes (grpE-dnaK-dnaJ and groELS operons). Prevents heat-shock induction of these operons. This Desulfitobacterium hafniense (strain DSM 10664 / DCB-2) protein is Heat-inducible transcription repressor HrcA.